The following is a 423-amino-acid chain: AP-1 complex subunit mu-1 (423 aa).

Ser-2 is subject to N-acetylserine. Phosphothreonine is present on residues Thr-152, Thr-154, and Thr-223. The MHD domain maps to 168–421; that stretch reads KNEVFLDVIE…ITQNGDYQLR (254 aa).

The protein belongs to the adaptor complexes medium subunit family. In terms of assembly, adaptor protein complex 1 (AP-1) is a heterotetramer composed of two large adaptins (gamma-type subunit AP1G1 and beta-type subunit AP1B1), a medium adaptin (mu-type subunit AP1M1 or AP1M2) and a small adaptin (sigma-type subunit AP1S1 or AP1S2 or AP1S3). Interacts with MARCHF11. In terms of processing, phosphorylation of membrane-bound AP1M1/AP1M2 increases its affinity for sorting signals.

It is found in the cytoplasmic vesicle. The protein localises to the clathrin-coated vesicle membrane. The protein resides in the golgi apparatus. Its function is as follows. Subunit of clathrin-associated adaptor protein complex 1 that plays a role in protein sorting in the trans-Golgi network (TGN) and endosomes. The AP complexes mediate the recruitment of clathrin to membranes and the recognition of sorting signals within the cytosolic tails of transmembrane cargo molecules. This is AP-1 complex subunit mu-1 from Rattus norvegicus (Rat).